Reading from the N-terminus, the 267-residue chain is MASSCLLLACVVAAAMVSAVSCGPPKVPPGPNITAAYGKQWLEARGTWYGKPKGAGPDDNGGACGYKDIDKAPFLGMNSCGNDPIFKDGKGCGSCFEVKCSKPEACSDKPVIIHITDMNTEPIAAYHFDLSGHAFGAMAKEGKDEELRKAGIIDMQFRRVRCKYPGETKVTFHVEKGSNPNYFAVLVKYVGGDGDVVKVELKEKGSEEWKPLNESWGAIWRIDTPKPLKGPFSLRVTTESDQKLVANDVIPDNWKANALYKSEIQVD.

The first 22 residues, 1–22 (MASSCLLLACVVAAAMVSAVSC), serve as a signal peptide directing secretion. The N-linked (GlcNAc...) asparagine glycan is linked to Asn-32. In terms of domain architecture, Expansin-like EG45 spans 61 to 167 (GGACGYKDID…RRVRCKYPGE (107 aa)). 3 disulfides stabilise this stretch: Cys-64-Cys-92, Cys-95-Cys-162, and Cys-100-Cys-106. Residues 181-262 (NYFAVLVKYV…NWKANALYKS (82 aa)) form the Expansin-like CBD domain. An N-linked (GlcNAc...) asparagine glycan is attached at Asn-213.

The protein belongs to the expansin family. Expansin B subfamily.

The protein localises to the secreted. It is found in the cell wall. The protein resides in the membrane. Its function is as follows. May cause loosening and extension of plant cell walls by disrupting non-covalent bonding between cellulose microfibrils and matrix glucans. No enzymatic activity has been found. May be required for rapid internodal elongation in deepwater rice during submergence. The protein is Expansin-B10 (EXPB10) of Oryza sativa subsp. japonica (Rice).